The following is a 314-amino-acid chain: Methionyl-tRNA formyltransferase (314 aa).

(6S)-5,6,7,8-tetrahydrofolate is bound at residue 112 to 115 (SLLP).

It belongs to the Fmt family.

The enzyme catalyses L-methionyl-tRNA(fMet) + (6R)-10-formyltetrahydrofolate = N-formyl-L-methionyl-tRNA(fMet) + (6S)-5,6,7,8-tetrahydrofolate + H(+). In terms of biological role, attaches a formyl group to the free amino group of methionyl-tRNA(fMet). The formyl group appears to play a dual role in the initiator identity of N-formylmethionyl-tRNA by promoting its recognition by IF2 and preventing the misappropriation of this tRNA by the elongation apparatus. The sequence is that of Methionyl-tRNA formyltransferase from Legionella pneumophila (strain Corby).